The following is a 506-amino-acid chain: Maturase K (506 aa).

It belongs to the intron maturase 2 family. MatK subfamily.

The protein localises to the plastid. It localises to the chloroplast. Usually encoded in the trnK tRNA gene intron. Probably assists in splicing its own and other chloroplast group II introns. In Angiopteris evecta (Mule's foot fern), this protein is Maturase K.